A 736-amino-acid polypeptide reads, in one-letter code: Eukaryotic translation initiation factor 3 subunit B (736 aa).

Positions 1–94 (MAAVFDDIRL…LFIEFEDAGA (94 aa)) are sufficient for interaction with HCR1 and TIF32. Positions 1 to 219 (MAAVFDDIRL…GIASWGGPQF (219 aa)) are sufficient for interaction with PIC8. The RRM domain occupies 37–120 (RYVVVDGAPV…HRLWVNGLDD (84 aa)). 10 WD repeats span residues 140–182 (EFEA…PENV), 186–224 (RRNW…RLRR), 226–244 (AHPD…YLVT), 245–284 (FSSE…CVKT), 288–328 (PPQQ…QLLG), 332–375 (MKIE…QSCK), 443–483 (EIKD…VSFY), 511–557 (AIDG…TEKI), 566–604 (ATLR…KAEN), and 616–662 (VREE…QDAM).

The protein belongs to the eIF-3 subunit B family. Component of the eukaryotic translation initiation factor 3 (eIF-3) complex.

Its subcellular location is the cytoplasm. In terms of biological role, RNA-binding component of the eukaryotic translation initiation factor 3 (eIF-3) complex, which is involved in protein synthesis of a specialized repertoire of mRNAs and, together with other initiation factors, stimulates binding of mRNA and methionyl-tRNAi to the 40S ribosome. The eIF-3 complex specifically targets and initiates translation of a subset of mRNAs involved in cell proliferation. The sequence is that of Eukaryotic translation initiation factor 3 subunit B from Eremothecium gossypii (strain ATCC 10895 / CBS 109.51 / FGSC 9923 / NRRL Y-1056) (Yeast).